A 525-amino-acid chain; its full sequence is GMP synthase [glutamine-hydrolyzing] (525 aa).

One can recognise a Glutamine amidotransferase type-1 domain in the interval 8-207 (KILILDFGSQ…ALEICACAAN (200 aa)). The active-site Nucleophile is C85. Residues H181 and E183 contribute to the active site. The region spanning 208 to 400 (WKPASIIEDA…LGLPYNMLYR (193 aa)) is the GMPS ATP-PPase domain. ATP is bound at residue 235-241 (SGGVDSS).

In terms of assembly, homodimer.

The catalysed reaction is XMP + L-glutamine + ATP + H2O = GMP + L-glutamate + AMP + diphosphate + 2 H(+). It functions in the pathway purine metabolism; GMP biosynthesis; GMP from XMP (L-Gln route): step 1/1. Catalyzes the synthesis of GMP from XMP. This chain is GMP synthase [glutamine-hydrolyzing], found in Shewanella halifaxensis (strain HAW-EB4).